A 221-amino-acid chain; its full sequence is Sentrin-specific protease 8 (221 aa).

Methionine 1 carries the N-acetylmethionine modification. A protease region spans residues 11 to 174 (SLLRQSDVSL…MYVICNTEAL (164 aa)). Active-site residues include histidine 102 and aspartate 119. The active-site Nucleophile is the cysteine 163.

Belongs to the peptidase C48 family.

In terms of biological role, protease that catalyzes two essential functions in the NEDD8 pathway: processing of full-length NEDD8 to its mature form and deconjugation of NEDD8 from targeted proteins such as cullins or p53. The sequence is that of Sentrin-specific protease 8 (Senp8) from Mus musculus (Mouse).